The following is a 197-amino-acid chain: dTTP/UTP pyrophosphatase (197 aa).

Catalysis depends on Asp-70, which acts as the Proton acceptor.

Belongs to the Maf family. YhdE subfamily. It depends on a divalent metal cation as a cofactor.

The protein localises to the cytoplasm. The catalysed reaction is dTTP + H2O = dTMP + diphosphate + H(+). It catalyses the reaction UTP + H2O = UMP + diphosphate + H(+). In terms of biological role, nucleoside triphosphate pyrophosphatase that hydrolyzes dTTP and UTP. May have a dual role in cell division arrest and in preventing the incorporation of modified nucleotides into cellular nucleic acids. The polypeptide is dTTP/UTP pyrophosphatase (Methanosarcina barkeri (strain Fusaro / DSM 804)).